Reading from the N-terminus, the 378-residue chain is Erythronate-4-phosphate dehydrogenase (378 aa).

Positions 45 and 66 each coordinate substrate. NAD(+) contacts are provided by Asp146 and Thr175. Arg208 is a catalytic residue. Asp232 provides a ligand contact to NAD(+). Residue Glu237 is part of the active site. His254 functions as the Proton donor in the catalytic mechanism. Residue Gly257 participates in NAD(+) binding. Tyr258 is a substrate binding site.

This sequence belongs to the D-isomer specific 2-hydroxyacid dehydrogenase family. PdxB subfamily. Homodimer.

The protein localises to the cytoplasm. The catalysed reaction is 4-phospho-D-erythronate + NAD(+) = (R)-3-hydroxy-2-oxo-4-phosphooxybutanoate + NADH + H(+). It participates in cofactor biosynthesis; pyridoxine 5'-phosphate biosynthesis; pyridoxine 5'-phosphate from D-erythrose 4-phosphate: step 2/5. In terms of biological role, catalyzes the oxidation of erythronate-4-phosphate to 3-hydroxy-2-oxo-4-phosphonooxybutanoate. This chain is Erythronate-4-phosphate dehydrogenase, found in Pectobacterium atrosepticum (strain SCRI 1043 / ATCC BAA-672) (Erwinia carotovora subsp. atroseptica).